We begin with the raw amino-acid sequence, 347 residues long: NADH-ubiquinone oxidoreductase chain 2 (347 aa).

The next 10 helical transmembrane spans lie at isoleucine 13–phenylalanine 33, tyrosine 59–valine 79, isoleucine 96–proline 116, isoleucine 122–leucine 142, valine 144–isoleucine 164, isoleucine 178–methionine 200, leucine 210–histidine 232, isoleucine 246–isoleucine 266, isoleucine 276–leucine 296, and leucine 326–leucine 346.

This sequence belongs to the complex I subunit 2 family. As to quaternary structure, core subunit of respiratory chain NADH dehydrogenase (Complex I) which is composed of 45 different subunits. Interacts with TMEM242.

The protein resides in the mitochondrion inner membrane. The enzyme catalyses a ubiquinone + NADH + 5 H(+)(in) = a ubiquinol + NAD(+) + 4 H(+)(out). In terms of biological role, core subunit of the mitochondrial membrane respiratory chain NADH dehydrogenase (Complex I) which catalyzes electron transfer from NADH through the respiratory chain, using ubiquinone as an electron acceptor. Essential for the catalytic activity and assembly of complex I. The protein is NADH-ubiquinone oxidoreductase chain 2 of Rhynchonycteris naso (Brazilian long-nosed bat).